We begin with the raw amino-acid sequence, 370 residues long: MTVDAVRVELGARAYEVRIGPGLIARAGAEIAPLLRRPKLAILTDETVAGLHLAPFQAALAEAGIASSALALPAGEATKGWEQFSRAVEWLLEEKVERRDVVVALGGGVIGDLAGFAAAVLRRGVRFVQVPTTLLAQVDSSVGGKTGINTAQGKNLVGAFHQPSLVLADIGVLESLPARDFLAGYGEVVKYGLLGDADFFEWLEGAAPRLASDPEARQRAVRRSVEMKAEIVARDETEEGDRALLNLGHTFCHALEKATGYSDRLLHGEGVAIGCALAFELSQHMGLCPQEAPSRLRAHLRAMGMKVDLRDIPGDLPDAEGLLRLMAQDKKVVDGKLRFILARDIGAAFVAKDVPGDLVRRILQEALATR.

NAD(+) is bound by residues 108–112, 132–133, Lys-145, and Lys-154; these read GVIGD and TT. Residues Glu-187, His-249, and His-267 each coordinate Zn(2+).

It belongs to the sugar phosphate cyclases superfamily. Dehydroquinate synthase family. Co(2+) serves as cofactor. Zn(2+) is required as a cofactor. Requires NAD(+) as cofactor.

The protein localises to the cytoplasm. The enzyme catalyses 7-phospho-2-dehydro-3-deoxy-D-arabino-heptonate = 3-dehydroquinate + phosphate. The protein operates within metabolic intermediate biosynthesis; chorismate biosynthesis; chorismate from D-erythrose 4-phosphate and phosphoenolpyruvate: step 2/7. In terms of biological role, catalyzes the conversion of 3-deoxy-D-arabino-heptulosonate 7-phosphate (DAHP) to dehydroquinate (DHQ). The polypeptide is 3-dehydroquinate synthase (Cereibacter sphaeroides (strain ATCC 17025 / ATH 2.4.3) (Rhodobacter sphaeroides)).